The sequence spans 274 residues: Penicillin-insensitive murein endopeptidase (274 aa).

An N-terminal signal peptide occupies residues 1–19; that stretch reads MNKTAIALLALLASSASLA. Disulfide bonds link Cys-44-Cys-265, Cys-187-Cys-235, and Cys-216-Cys-223. Zn(2+) is bound by residues His-110, His-113, Asp-120, Asp-147, His-150, and His-211. A disordered region spans residues 227–274; it reads PLPPPGDGCGAELQSWFEPPKPGTTKPEKKTPPPLPPSCQALLDEHVI.

Belongs to the peptidase M74 family. In terms of assembly, dimer. The cofactor is Zn(2+).

The protein localises to the periplasm. Functionally, murein endopeptidase that cleaves the D-alanyl-meso-2,6-diamino-pimelyl amide bond that connects peptidoglycan strands. Likely plays a role in the removal of murein from the sacculus. This chain is Penicillin-insensitive murein endopeptidase, found in Escherichia coli (strain SE11).